We begin with the raw amino-acid sequence, 697 residues long: Polyribonucleotide nucleotidyltransferase (697 aa).

Residues Asp-488 and Asp-494 each contribute to the Mg(2+) site. One can recognise a KH domain in the interval 555–614 (PTFEVITINPDKIRDVIGKGGATIRQITEETKAAIDIEDNGTVRVFGETKAAAKAAIAKI). Residues 624–692 (GKIYDGKVIR…NRGRIKLTMK (69 aa)) form the S1 motif domain.

It belongs to the polyribonucleotide nucleotidyltransferase family. As to quaternary structure, component of the RNA degradosome, which is a multiprotein complex involved in RNA processing and mRNA degradation. Mg(2+) serves as cofactor.

It localises to the cytoplasm. The catalysed reaction is RNA(n+1) + phosphate = RNA(n) + a ribonucleoside 5'-diphosphate. Functionally, involved in mRNA degradation. Catalyzes the phosphorolysis of single-stranded polyribonucleotides processively in the 3'- to 5'-direction. The polypeptide is Polyribonucleotide nucleotidyltransferase (Acinetobacter baumannii (strain AB307-0294)).